A 626-amino-acid polypeptide reads, in one-letter code: Carnitine O-acetyltransferase (626 aa).

Lysine 93 carries the N6-succinyllysine modification. N6-acetyllysine; alternate is present on lysine 261. Lysine 261 is modified (N6-succinyllysine; alternate). Position 268 is an N6-acetyllysine (lysine 268). The active-site Proton acceptor is histidine 343. CoA contacts are provided by residues lysine 419 and 423–430 (KSEKLSPD). 2 residues coordinate (R)-carnitine: tyrosine 452 and serine 454. Serine 456 contacts CoA. Residue threonine 465 participates in (R)-carnitine binding. CoA contacts are provided by arginine 504 and glutamine 555. The short motif at 624–626 (AKL) is the Microbody targeting signal element.

The protein belongs to the carnitine/choline acetyltransferase family. Monomer.

It localises to the endoplasmic reticulum. The protein localises to the peroxisome. It is found in the mitochondrion inner membrane. The catalysed reaction is (R)-carnitine + acetyl-CoA = O-acetyl-(R)-carnitine + CoA. The enzyme catalyses propanoyl-CoA + (R)-carnitine = O-propanoyl-(R)-carnitine + CoA. It catalyses the reaction butanoyl-CoA + (R)-carnitine = O-butanoyl-(R)-carnitine + CoA. It carries out the reaction hexanoyl-CoA + (R)-carnitine = O-hexanoyl-(R)-carnitine + CoA. The catalysed reaction is octanoyl-CoA + (R)-carnitine = O-octanoyl-(R)-carnitine + CoA. The enzyme catalyses decanoyl-CoA + (R)-carnitine = O-decanoyl-(R)-carnitine + CoA. It catalyses the reaction 3-methylbutanoyl-CoA + (R)-carnitine = O-3-methylbutanoyl-(R)-carnitine + CoA. It carries out the reaction 2-methylpropanoyl-CoA + (R)-carnitine = O-isobutanoyl-(R)-carnitine + CoA. The catalysed reaction is 2-methylbutanoyl-CoA + (R)-carnitine = O-2-methylbutanoyl-(R)-carnitine + CoA. The enzyme catalyses acetoacetyl-CoA + (R)-carnitine = O-3-oxobutanoyl-(R)-carnitine + CoA. It catalyses the reaction 3-hydroxybutanoyl-CoA + (R)-carnitine = O-3-hydroxybutanoyl-(R)-carnitine + CoA. It carries out the reaction 4,8-dimethylnonanoyl-CoA + (R)-carnitine = O-4,8-dimethylnonanoyl-(R)-carnitine + CoA. The catalysed reaction is 2,6-dimethylheptanoyl-CoA + (R)-carnitine = O-2,6-dimethylheptanoyl-(R)-carnitine + CoA. In terms of biological role, catalyzes the reversible transfer of acyl groups from carnitine to coenzyme A (CoA) and regulates the acyl-CoA/CoA ratio. Also plays a crucial role in the transport of fatty acids for beta-oxidation. Responsible for the synthesis of short- and branched-chain acylcarnitines. Active towards some branched-chain amino acid oxidation pathway (BCAAO) intermediates. Trans-2-enoyl-CoAs and 2-methylacyl-CoAs are poor substrates. The sequence is that of Carnitine O-acetyltransferase from Mus musculus (Mouse).